Consider the following 476-residue polypeptide: Aspartyl/glutamyl-tRNA(Asn/Gln) amidotransferase subunit B (476 aa).

This sequence belongs to the GatB/GatE family. GatB subfamily. In terms of assembly, heterotrimer of A, B and C subunits.

The enzyme catalyses L-glutamyl-tRNA(Gln) + L-glutamine + ATP + H2O = L-glutaminyl-tRNA(Gln) + L-glutamate + ADP + phosphate + H(+). It catalyses the reaction L-aspartyl-tRNA(Asn) + L-glutamine + ATP + H2O = L-asparaginyl-tRNA(Asn) + L-glutamate + ADP + phosphate + 2 H(+). Its function is as follows. Allows the formation of correctly charged Asn-tRNA(Asn) or Gln-tRNA(Gln) through the transamidation of misacylated Asp-tRNA(Asn) or Glu-tRNA(Gln) in organisms which lack either or both of asparaginyl-tRNA or glutaminyl-tRNA synthetases. The reaction takes place in the presence of glutamine and ATP through an activated phospho-Asp-tRNA(Asn) or phospho-Glu-tRNA(Gln). This Lactobacillus gasseri (strain ATCC 33323 / DSM 20243 / BCRC 14619 / CIP 102991 / JCM 1131 / KCTC 3163 / NCIMB 11718 / NCTC 13722 / AM63) protein is Aspartyl/glutamyl-tRNA(Asn/Gln) amidotransferase subunit B.